The primary structure comprises 112 residues: C-C motif chemokine 27 (112 aa).

The first 24 residues, 1 to 24 (MKGPPTFCSLLLLSLLLSPDPTAA), serve as a signal peptide directing secretion. Cystine bridges form between cysteine 33–cysteine 62 and cysteine 34–cysteine 77.

It belongs to the intercrine beta (chemokine CC) family. Monomer, dimer, and tetramer. Heparin avidly promotes oligomerization. Interacts with TNFAIP6 (via Link domain). Testis, thymus, placenta, ovary and skin.

The protein resides in the secreted. In terms of biological role, chemotactic factor that attracts skin-associated memory T-lymphocytes. May play a role in mediating homing of lymphocytes to cutaneous sites. Binds to CCR10. This is C-C motif chemokine 27 (CCL27) from Homo sapiens (Human).